Consider the following 190-residue polypeptide: Large ribosomal subunit protein bL9 (190 aa).

This sequence belongs to the bacterial ribosomal protein bL9 family.

Functionally, binds to the 23S rRNA. The sequence is that of Large ribosomal subunit protein bL9 from Methylobacterium radiotolerans (strain ATCC 27329 / DSM 1819 / JCM 2831 / NBRC 15690 / NCIMB 10815 / 0-1).